The following is a 40-amino-acid chain: Photosystem II reaction center protein J (40 aa).

Residues Ile-8 to Phe-28 form a helical membrane-spanning segment.

It belongs to the PsbJ family. PSII is composed of 1 copy each of membrane proteins PsbA, PsbB, PsbC, PsbD, PsbE, PsbF, PsbH, PsbI, PsbJ, PsbK, PsbL, PsbM, PsbT, PsbX, PsbY, PsbZ, Psb30/Ycf12, at least 3 peripheral proteins of the oxygen-evolving complex and a large number of cofactors. It forms dimeric complexes.

The protein localises to the plastid. It localises to the chloroplast thylakoid membrane. Its function is as follows. One of the components of the core complex of photosystem II (PSII). PSII is a light-driven water:plastoquinone oxidoreductase that uses light energy to abstract electrons from H(2)O, generating O(2) and a proton gradient subsequently used for ATP formation. It consists of a core antenna complex that captures photons, and an electron transfer chain that converts photonic excitation into a charge separation. This is Photosystem II reaction center protein J from Musa acuminata (Banana).